The primary structure comprises 99 residues: Acylphosphatase (99 aa).

The 93-residue stretch at 5–97 (VRQVMIRGRV…RPGERFSQLP (93 aa)) folds into the Acylphosphatase-like domain. Residues arginine 20 and asparagine 38 contribute to the active site.

This sequence belongs to the acylphosphatase family.

It catalyses the reaction an acyl phosphate + H2O = a carboxylate + phosphate + H(+). The sequence is that of Acylphosphatase (acyP) from Nitrobacter winogradskyi (strain ATCC 25391 / DSM 10237 / CIP 104748 / NCIMB 11846 / Nb-255).